The sequence spans 179 residues: Large ribosomal subunit protein uL5 (179 aa).

The protein belongs to the universal ribosomal protein uL5 family. In terms of assembly, part of the 50S ribosomal subunit; part of the 5S rRNA/L5/L18/L25 subcomplex. Contacts the 5S rRNA and the P site tRNA. Forms a bridge to the 30S subunit in the 70S ribosome.

In terms of biological role, this is one of the proteins that bind and probably mediate the attachment of the 5S RNA into the large ribosomal subunit, where it forms part of the central protuberance. In the 70S ribosome it contacts protein S13 of the 30S subunit (bridge B1b), connecting the 2 subunits; this bridge is implicated in subunit movement. Contacts the P site tRNA; the 5S rRNA and some of its associated proteins might help stabilize positioning of ribosome-bound tRNAs. This Prochlorococcus marinus (strain MIT 9312) protein is Large ribosomal subunit protein uL5.